A 350-amino-acid chain; its full sequence is GTPase Obg (350 aa).

In terms of domain architecture, Obg spans Met1–Ile158. In terms of domain architecture, OBG-type G spans Ala159 to Lys339. Residues Gly165–Ser172, Phe190–Thr194, Asp212–Gly215, Ser280–Asp283, and Ser320–Leu322 contribute to the GTP site. Mg(2+)-binding residues include Ser172 and Thr192.

It belongs to the TRAFAC class OBG-HflX-like GTPase superfamily. OBG GTPase family. As to quaternary structure, monomer. Mg(2+) serves as cofactor.

The protein localises to the cytoplasm. Its function is as follows. An essential GTPase which binds GTP, GDP and possibly (p)ppGpp with moderate affinity, with high nucleotide exchange rates and a fairly low GTP hydrolysis rate. Plays a role in control of the cell cycle, stress response, ribosome biogenesis and in those bacteria that undergo differentiation, in morphogenesis control. In Campylobacter jejuni (strain RM1221), this protein is GTPase Obg.